We begin with the raw amino-acid sequence, 150 residues long: Snake venom vascular endothelial growth factor toxin barietin (150 aa).

Residues 1–24 form the signal peptide; sequence MAAYLLAVAILFCIQGWPSGTVQG. E25 carries the post-translational modification Pyrrolidone carboxylic acid (Glu). Disulfide bonds link C38–C80, C69–C115, and C73–C117. A disordered region spans residues 119-150; it reads PRSGSRVNIGKHKRSPEEGEREPSSPLTPGSL. A propeptide spanning residues 122 to 150 is cleaved from the precursor; sequence GSRVNIGKHKRSPEEGEREPSSPLTPGSL.

Belongs to the PDGF/VEGF growth factor family. Snake venom VEGF subfamily. In terms of assembly, homodimer; disulfide-linked. Interacts with high affinity with VEGF receptor-2 (KDR), and with a lower affinity with VEGF receptor-1 (FLT1). Does not bind VEGF receptor-3 (FLT4) and neuropilin-1 (NRP1). As to expression, expressed by the venom gland.

It localises to the secreted. Snake venom VEGFs that may contribute to venom dispersion and prey subjugation by inducing vascular permeability and hypotension. This protein induces an increase in capillary permeability after intradermal injection, as well as a drastic hypotensive effect after intravenous injection. The hypotension is mediated by nitric oxide (NO), which is produced by VEGF-activated endothelium NO synthase. Also induces angiogenesis in vitro, probably through VEGF receptor (KDR/VEGFR-2) signaling. The protein is Snake venom vascular endothelial growth factor toxin barietin of Bitis arietans (African puff adder).